Here is a 408-residue protein sequence, read N- to C-terminus: Arginine biosynthesis bifunctional protein ArgJ 1 (408 aa).

Substrate contacts are provided by Thr154, Lys180, Thr191, Glu277, Asn403, and Ser408. Thr191 functions as the Nucleophile in the catalytic mechanism.

It belongs to the ArgJ family. As to quaternary structure, heterotetramer of two alpha and two beta chains.

The protein resides in the cytoplasm. It catalyses the reaction N(2)-acetyl-L-ornithine + L-glutamate = N-acetyl-L-glutamate + L-ornithine. The catalysed reaction is L-glutamate + acetyl-CoA = N-acetyl-L-glutamate + CoA + H(+). Its pathway is amino-acid biosynthesis; L-arginine biosynthesis; L-ornithine and N-acetyl-L-glutamate from L-glutamate and N(2)-acetyl-L-ornithine (cyclic): step 1/1. It participates in amino-acid biosynthesis; L-arginine biosynthesis; N(2)-acetyl-L-ornithine from L-glutamate: step 1/4. Functionally, catalyzes two activities which are involved in the cyclic version of arginine biosynthesis: the synthesis of N-acetylglutamate from glutamate and acetyl-CoA as the acetyl donor, and of ornithine by transacetylation between N(2)-acetylornithine and glutamate. This Clostridium acetobutylicum (strain ATCC 824 / DSM 792 / JCM 1419 / IAM 19013 / LMG 5710 / NBRC 13948 / NRRL B-527 / VKM B-1787 / 2291 / W) protein is Arginine biosynthesis bifunctional protein ArgJ 1.